We begin with the raw amino-acid sequence, 2148 residues long: Polyketide synthase 1 (2148 aa).

Residues 19–261 (FIFGDQSSCN…TPLAVHAPYH (243 aa)) are N-terminal acylcarrier protein transacylase domain (SAT). Residues 394 to 829 (DSKIAIIGMS…GGNTALLVED (436 aa)) enclose the Ketosynthase family 3 (KS3) domain. Residues Cys-566, His-701, and His-745 each act as for beta-ketoacyl synthase activity in the active site. Positions 929 to 1233 (AFVFSGQGSQ…PSLMRNKDGW (305 aa)) are malonyl-CoA:ACP transacylase (MAT) domain. The For acyl/malonyl transferase activity role is filled by Ser-1018. The product template (PT) domain stretch occupies residues 1310-1624 (TASVHRIVHE…RKVLNTAMPP (315 aa)). An N-terminal hotdog fold region spans residues 1314–1447 (HRIVHESVDK…SSLHFEQPKV (134 aa)). One can recognise a PKS/mFAS DH domain in the interval 1314–1619 (HRIVHESVDK…FQGIPRKVLN (306 aa)). The Proton acceptor; for dehydratase activity role is filled by His-1346. The tract at residues 1474 to 1619 (LNSRMSSGVI…FQGIPRKVLN (146 aa)) is C-terminal hotdog fold. Asp-1533 acts as the Proton donor; for dehydratase activity in catalysis. The segment at 1619–1655 (NTAMPPPKSQNEAQVHSSPAKSRPKPPGSASSVHSGR) is disordered. Polar residues predominate over residues 1627-1638 (SQNEAQVHSSPA). The Carrier 1 domain maps to 1678–1752 (RDPMQALFKI…DLATHLGFDT (75 aa)). Ser-1712 carries the O-(pantetheine 4'-phosphoryl)serine modification. The segment covering 1756–1769 (DQSSGQSSSCGGLS) has biased composition (low complexity). The interval 1756-1796 (DQSSGQSSSCGGLSPRSDSTGEITSNATTPPSLSPRGSVSG) is disordered. Positions 1771 to 1796 (RSDSTGEITSNATTPPSLSPRGSVSG) are enriched in polar residues. The region spanning 1793-1870 (SVSGSQCKDV…SFKHMFQQGH (78 aa)) is the Carrier 2 domain. O-(pantetheine 4'-phosphoryl)serine is present on Ser-1830. The segment at 1882–2146 (LKQYRATSTL…ERVAAFIRST (265 aa)) is thioesterase (TE) domain. Ser-1973 functions as the For thioesterase activity in the catalytic mechanism.

Its function is as follows. Polyketide synthase; part of the Pks1 gene cluster that mediates the biosynthesis of an anthraquinone derivative pigment that contributes to conidial pigmentation that provides protection from UV radiation, heat and cold stress. The polyketide synthase Pks1 produces 1-acetyl-2,4,6,8-tetrahydroxy-9,10-anthraquinone though condensation of acetyl-CoA with malonyl-CoA. The dehydratase EthD and the laccase Mlac1 further convert the anthraquinone derivative into the final conidial pigment. This is Polyketide synthase 1 from Metarhizium acridum (strain CQMa 102).